The sequence spans 334 residues: Amino acid--[acyl-carrier-protein] ligase 2 (334 aa).

Position 131 (Cys-131) interacts with Zn(2+). ATP-binding positions include Arg-159, Glu-161, and 168 to 169 (RL). Glu-176 serves as a coordination point for Zn(2+). Glu-176 contributes to the an L-alpha-amino acid binding site. ATP contacts are provided by residues Lys-235 and 250-253 (ACMS). Residue Cys-279 coordinates Zn(2+). Arg-286 lines the ATP pocket.

This sequence belongs to the class-II aminoacyl-tRNA synthetase family. Amino acid--[acyl-carrier-protein] ligase subfamily. Homodimer. It depends on Zn(2+) as a cofactor.

It carries out the reaction an L-alpha-amino acid + holo-[ACP] + ATP = an L-alpha-aminoacyl-[ACP] + AMP + diphosphate. Catalyzes the ATP-dependent activation of L-glycine and its transfer to the phosphopantetheine prosthetic group covalently attached to the vicinal carrier protein blr6284 of yet unknown function. May participate in nonribosomal peptide synthesis or related processes. L-alanine is a poor substrate whereas L-serine or D-amino acids are not substrates for ATP-dependent activation. Does not display tRNA aminoacylation activity. The chain is Amino acid--[acyl-carrier-protein] ligase 2 from Bradyrhizobium diazoefficiens (strain JCM 10833 / BCRC 13528 / IAM 13628 / NBRC 14792 / USDA 110).